A 39-amino-acid polypeptide reads, in one-letter code: Mu-theraphotoxin-Ae1a (39 aa).

3 cysteine pairs are disulfide-bonded: Cys7-Cys21, Cys14-Cys26, and Cys20-Cys33. Phe39 is modified (phenylalanine amide).

The protein belongs to the neurotoxin 10 (Hwtx-1) family. 47 subfamily. As to expression, expressed by the venom gland.

It is found in the secreted. In terms of biological role, insecticidal toxin that acts, at least partially, by inhibiting insect voltage-gated sodium (NaV) channels of several insect species. The toxin binds to the voltage sensor in NaV channel domain II and inhibits channel opening by shifting the threshold for channel activation to more positive voltages. The toxin binding is sensitive to residues in the S1-S2 loop of the domain II voltage sensor. In vivo, the recombinant toxin causes paralysis and/or death to two dipteran species (Lucilia cuprina and Drosophila melanogaster). In contrast, the toxin does not show paralytic or lethal effect on the cotton bollworm Helicoverpa armigera and the triatomine bug Rhodinius prolixus. This Augacephalus ezendami (Mozambique baboon spider) protein is Mu-theraphotoxin-Ae1a.